A 338-amino-acid chain; its full sequence is MNVYYDKDCDLSIVQGKKVAIIGYGSQGHAHALNLQDSNVDVTVGLRANSGSWKKAENAGLKVAEVEEAVKAADIIMILTPDEFQKELYNDVIEPNIKQGATLAFAHGFAIHYNQVIPRSDLDVIMVAPKAPGHTVRSEFAKGGGIPDLIAIYQDASGQAKQLALSYAAGVGGGRSGIIETTFKDETETDLFGEQAVLCGGAVELVKMGFETLTEAGYAPEMAYFECLHELKLIVDLMYEGGIADMNYSISNNAEYGEYVTGPEVINEQSREAMRNALKRIQSGEYAKMFISEGATNYPSMTARRRNNAEHQIEITGAKLRGMMPWIGGNKIIDKDKN.

Residues 1–181 form the KARI N-terminal Rossmann domain; sequence MNVYYDKDCD…GGGRSGIIET (181 aa). Residues 24–27, Arg47, Ser50, Ser52, and 82–85 contribute to the NADP(+) site; these read YGSQ and DEFQ. Residue His107 is part of the active site. Gly133 provides a ligand contact to NADP(+). Positions 182–327 constitute a KARI C-terminal knotted domain; sequence TFKDETETDL…AKLRGMMPWI (146 aa). The Mg(2+) site is built by Asp190, Glu194, Glu226, and Glu230. Position 251 (Ser251) interacts with substrate.

This sequence belongs to the ketol-acid reductoisomerase family. Requires Mg(2+) as cofactor.

It catalyses the reaction (2R)-2,3-dihydroxy-3-methylbutanoate + NADP(+) = (2S)-2-acetolactate + NADPH + H(+). The catalysed reaction is (2R,3R)-2,3-dihydroxy-3-methylpentanoate + NADP(+) = (S)-2-ethyl-2-hydroxy-3-oxobutanoate + NADPH + H(+). The protein operates within amino-acid biosynthesis; L-isoleucine biosynthesis; L-isoleucine from 2-oxobutanoate: step 2/4. It participates in amino-acid biosynthesis; L-valine biosynthesis; L-valine from pyruvate: step 2/4. Involved in the biosynthesis of branched-chain amino acids (BCAA). Catalyzes an alkyl-migration followed by a ketol-acid reduction of (S)-2-acetolactate (S2AL) to yield (R)-2,3-dihydroxy-isovalerate. In the isomerase reaction, S2AL is rearranged via a Mg-dependent methyl migration to produce 3-hydroxy-3-methyl-2-ketobutyrate (HMKB). In the reductase reaction, this 2-ketoacid undergoes a metal-dependent reduction by NADPH to yield (R)-2,3-dihydroxy-isovalerate. The polypeptide is Ketol-acid reductoisomerase (NADP(+)) (Psychrobacter cryohalolentis (strain ATCC BAA-1226 / DSM 17306 / VKM B-2378 / K5)).